The sequence spans 117 residues: Venom protein TxLP11 (117 aa).

Positions 1–22 (MNTKTLIVVFLVCLLVSEVVLA) are cleaved as a signal peptide.

Post-translationally, contains 4 disulfide bonds. As to expression, expressed by the venom gland.

The protein resides in the secreted. This is Venom protein TxLP11 from Lychas mucronatus (Chinese swimming scorpion).